The primary structure comprises 238 residues: Sugar fermentation stimulation protein homolog (238 aa).

It belongs to the SfsA family.

This is Sugar fermentation stimulation protein homolog from Vibrio vulnificus (strain YJ016).